The primary structure comprises 443 residues: Threonine/serine transporter TdcC (443 aa).

11 helical membrane passes run 22 to 42 (TTWT…FFPI), 44 to 64 (AGFG…PIAF), 97 to 117 (GVVI…IYGV), 140 to 160 (VVAL…KDLM), 163 to 183 (VMSY…LSLI), 207 to 227 (ILVT…FSPI), 259 to 279 (ASML…FTLS), 319 to 339 (ASII…LGTL), 366 to 386 (LSMV…PNIL), 389 to 409 (IEAM…MYAI), and 423 to 443 (DNLF…YKLF).

This sequence belongs to the amino acid/polyamine transporter 2 family. SdaC/TdcC subfamily.

It localises to the cell inner membrane. It catalyses the reaction L-threonine(in) + H(+)(in) = L-threonine(out) + H(+)(out). The catalysed reaction is L-serine(in) + H(+)(in) = L-serine(out) + H(+)(out). Involved in the import of threonine and serine into the cell, with the concomitant import of a proton (symport system). The protein is Threonine/serine transporter TdcC of Klebsiella pneumoniae (strain 342).